The chain runs to 381 residues: Glycerophosphocholine acyltransferase 1 (381 aa).

At 1–63 (MANNEDSNSN…IAKQAEEHER (63 aa)) the chain is on the cytoplasmic side. A helical membrane pass occupies residues 64–84 (FINKVTHLVGVLGFGGFCFLL). Residues 85–89 (GARPQ) lie on the Lumenal side of the membrane. A helical membrane pass occupies residues 90-110 (DIPLVYCFFYVIFVPLRWIYY). Topologically, residues 111-116 (RFKKWH) are cytoplasmic. Residues 117–137 (YYLLDFCYYANTIFLVDLLLY) form a helical membrane-spanning segment. Residues 138–141 (PKNE) are Lumenal-facing. The helical transmembrane segment at 142–162 (KLFMVCFSFAEGPLAWAIIVW) threads the bilayer. At 163–173 (RCSLVFSSPDK) the chain is on the cytoplasmic side. The helical transmembrane segment at 174-194 (IVSVLIHLLPGLVFFTIRWWN) threads the bilayer. Topologically, residues 195 to 223 (PATFAAMHPVGTDRRVSWPYVEDKAYLFT) are lumenal. Residues 224–244 (WLFLVPLVVYTLWQVLYFLIV) form a helical membrane-spanning segment. The Cytoplasmic portion of the chain corresponds to 245–291 (NVLRRQRLLRDPEVMTSYRELSKKAEKANNKLWQLSGLLGDQNRIWM). Residues 292 to 312 (YILFQAIFTVATMALTVPIFL) form a helical membrane-spanning segment. Topologically, residues 313-315 (SYR) are lumenal. Residues 316 to 336 (LHVIFQILKISAAVWNGGSFL) form a helical membrane-spanning segment. The Cytoplasmic segment spans residues 337 to 381 (LEVMPRQVIQKEKKKKAEMQPIEEQILHHEAVSHPTENEPKSTET).

Belongs to the GPC1 family.

It is found in the membrane. The enzyme catalyses sn-glycerol 3-phosphocholine + an acyl-CoA = a 1-acyl-sn-glycero-3-phosphocholine + CoA. It carries out the reaction sn-glycero-3-phosphoethanolamine + an acyl-CoA = a monoacyl-sn-glycero-3-phosphoethanolamine + CoA. The catalysed reaction is sn-glycerol 3-phosphocholine + (9Z)-octadecenoyl-CoA = (9Z-octadecenoyl)-sn-glycero-3-phosphocholine + CoA. Its function is as follows. Glycerophosphocholine acyltransferase (GPCAT) that utilizes acyl-CoA to acylate glycero-3-phosphocholine (GPC), forming lysophosphatidylcholine (LPC). Shows broad acyl specificities with a preference for 16:0-CoA, polyunsaturated acyl-CoA, and the hydroxylated ricinoleoyl-CoA. Also catalyzes the acylation of glycero-3-phosphoethanolamine (GPE) with acyl-CoA. In addition to acyl-CoA, GPCAT efficiently utilizes LPC and lysophosphatidylethanolamine (LPE) as acyl donors in the acylation of GPC. Contributes to the maintenance of phosphatidylcholine (PC) homeostasis and might also have specific functions in acyl editing of PC, such as transferring acyl groups modified at the sn-2 position of PC to the sn-1. This chain is Glycerophosphocholine acyltransferase 1, found in Arabidopsis thaliana (Mouse-ear cress).